Here is a 94-residue protein sequence, read N- to C-terminus: Putative pterin-4-alpha-carbinolamine dehydratase (94 aa).

Belongs to the pterin-4-alpha-carbinolamine dehydratase family.

The enzyme catalyses (4aS,6R)-4a-hydroxy-L-erythro-5,6,7,8-tetrahydrobiopterin = (6R)-L-erythro-6,7-dihydrobiopterin + H2O. This is Putative pterin-4-alpha-carbinolamine dehydratase from Mycobacteroides abscessus (strain ATCC 19977 / DSM 44196 / CCUG 20993 / CIP 104536 / JCM 13569 / NCTC 13031 / TMC 1543 / L948) (Mycobacterium abscessus).